The chain runs to 326 residues: Transcription cofactor vestigial-like protein 3 (326 aa).

The segment at 54–82 (SLEVTLPSKQEEEEEEEEDEEEEEKDQPA) is disordered. Residue Lys62 forms a Glycyl lysine isopeptide (Lys-Gly) (interchain with G-Cter in SUMO2) linkage. The segment covering 64-78 (EEEEEEEEDEEEEEK) has biased composition (acidic residues). A Glycyl lysine isopeptide (Lys-Gly) (interchain with G-Cter in SUMO2) cross-link involves residue Lys129. The tract at residues 184–208 (TADPNSWPGHGLHQTGPAPPPTASE) is disordered.

It belongs to the vestigial family.

It is found in the nucleus. In terms of biological role, may act as a specific coactivator for the mammalian TEFs. This chain is Transcription cofactor vestigial-like protein 3, found in Mus musculus (Mouse).